The sequence spans 621 residues: Proton pump-interactor BIP131 (621 aa).

Residues 250-305 (IDEVKRDRQAVRDKIKVLEDQIHAVDGEIAALQDDLTAATARKDKAFEALNELRKT) are a coiled coil. The segment covering 374–387 (SRDGRMRNPDEKPI) has biased composition (basic and acidic residues). The segment at 374–572 (SRDGRMRNPD…RSTVTKTKTP (199 aa)) is disordered. Over residues 430–441 (KAPAKAAKAKQP) the composition is skewed to low complexity. Residues 448 to 516 (PDVHDDEPPK…AEKKLKEKEK (69 aa)) show a composition bias toward basic and acidic residues. The stretch at 466-524 (EAKLKEMKRQEEIEKNKLALERKKKQAEKQAMKAAARAEKEAEKKLKEKEKKARKRSAT) forms a coiled coil. Residues 589–609 (WGAPMAALAAALVALLGALVY) form a helical membrane-spanning segment.

This sequence belongs to the plant proton pump-interactor protein family. As to quaternary structure, interacts with BRI1.

Its subcellular location is the cell membrane. In terms of biological role, may regulate plasma membrane ATPase activity. The chain is Proton pump-interactor BIP131 from Oryza sativa subsp. japonica (Rice).